The chain runs to 298 residues: UDP-N-acetylenolpyruvoylglucosamine reductase (298 aa).

Residues 26–190 form the FAD-binding PCMH-type domain; the sequence is RAGGPAERLY…VAAVLDLEPG (165 aa). Arg170 is a catalytic residue. The active-site Proton donor is Ser219. Glu289 is an active-site residue.

This sequence belongs to the MurB family. FAD is required as a cofactor.

It localises to the cytoplasm. The catalysed reaction is UDP-N-acetyl-alpha-D-muramate + NADP(+) = UDP-N-acetyl-3-O-(1-carboxyvinyl)-alpha-D-glucosamine + NADPH + H(+). It participates in cell wall biogenesis; peptidoglycan biosynthesis. Its function is as follows. Cell wall formation. The chain is UDP-N-acetylenolpyruvoylglucosamine reductase from Alkalilimnicola ehrlichii (strain ATCC BAA-1101 / DSM 17681 / MLHE-1).